A 107-amino-acid polypeptide reads, in one-letter code: Thioredoxin (107 aa).

The 106-residue stretch at 2–107 (SVEAVVKQVD…GIRELIQANA (106 aa)) folds into the Thioredoxin domain. Active-site nucleophile residues include Cys-34 and Cys-37. Cys-34 and Cys-37 are oxidised to a cystine.

Belongs to the thioredoxin family.

Participates in various redox reactions through the reversible oxidation of its active center dithiol to a disulfide and catalyzes dithiol-disulfide exchange reactions. In Echinococcus granulosus (Hydatid tapeworm), this protein is Thioredoxin (TRX).